The primary structure comprises 174 residues: UPF0200 protein PAE1629 (174 aa).

An ATP-binding site is contributed by 9 to 16; sequence GLPGSGKT.

The protein belongs to the UPF0200 family.

In Pyrobaculum aerophilum (strain ATCC 51768 / DSM 7523 / JCM 9630 / CIP 104966 / NBRC 100827 / IM2), this protein is UPF0200 protein PAE1629.